Reading from the N-terminus, the 215-residue chain is Probable transaldolase (215 aa).

Lys83 (schiff-base intermediate with substrate) is an active-site residue.

The protein belongs to the transaldolase family. Type 3B subfamily.

The protein resides in the cytoplasm. The enzyme catalyses D-sedoheptulose 7-phosphate + D-glyceraldehyde 3-phosphate = D-erythrose 4-phosphate + beta-D-fructose 6-phosphate. The protein operates within carbohydrate degradation; pentose phosphate pathway; D-glyceraldehyde 3-phosphate and beta-D-fructose 6-phosphate from D-ribose 5-phosphate and D-xylulose 5-phosphate (non-oxidative stage): step 2/3. Transaldolase is important for the balance of metabolites in the pentose-phosphate pathway. The chain is Probable transaldolase from Clostridium perfringens (strain ATCC 13124 / DSM 756 / JCM 1290 / NCIMB 6125 / NCTC 8237 / Type A).